Consider the following 395-residue polypeptide: Ribosomal RNA large subunit methyltransferase G (395 aa).

The protein belongs to the methyltransferase superfamily. RlmG family.

Its subcellular location is the cytoplasm. It carries out the reaction guanosine(1835) in 23S rRNA + S-adenosyl-L-methionine = N(2)-methylguanosine(1835) in 23S rRNA + S-adenosyl-L-homocysteine + H(+). Specifically methylates the guanine in position 1835 (m2G1835) of 23S rRNA. This chain is Ribosomal RNA large subunit methyltransferase G, found in Yersinia pseudotuberculosis serotype O:1b (strain IP 31758).